Reading from the N-terminus, the 349-residue chain is Nicotinate-nucleotide--dimethylbenzimidazole phosphoribosyltransferase (349 aa).

Glu-313 acts as the Proton acceptor in catalysis.

The protein belongs to the CobT family.

The catalysed reaction is 5,6-dimethylbenzimidazole + nicotinate beta-D-ribonucleotide = alpha-ribazole 5'-phosphate + nicotinate + H(+). It participates in nucleoside biosynthesis; alpha-ribazole biosynthesis; alpha-ribazole from 5,6-dimethylbenzimidazole: step 1/2. Catalyzes the synthesis of alpha-ribazole-5'-phosphate from nicotinate mononucleotide (NAMN) and 5,6-dimethylbenzimidazole (DMB). In Mycobacterium avium (strain 104), this protein is Nicotinate-nucleotide--dimethylbenzimidazole phosphoribosyltransferase.